Consider the following 956-residue polypeptide: MLSINNKLKNLKLSTVKNLYNKSSSISIILVNNNNNNNNNNNNNNNNNNNNNNNNNNFISLSTTNLFNQKLCIESYKKVNYCKKKGGGNKNNDDNDNEKNEKNEKKVKNEKKEKNEKNDGNEKVEIVEDNDLIVPLSKELLQFDKPSNKRKDWPLNSEVVIYPSNSVNFIGTTGPINLGFQFITRLVPNASGKTFLGFFLCKDAYRNNNNQIGRTIDSIHNVGVLAQVTLSPSGIYHFETIKRIRIKEVQNGQFPFIASIEPLSNDERELKDPRIAELMTKINVLSLEYRKLYPDVYTINSVDFENQIEVIDNPDYYLAAVINYYGLNYPDECQKILETQSVVKRLEMLYHMILNEQPLLALQQKIAKDLDDKTTAYKNKLLLTEQLKKLKALLGNETDEKEKTIEKYQNKLSELTLISESSKKVIQDEIYKISTIDPSSSEYSALKNYLEWLTNLPWGIYSADYFDLKHSKMVLDSDHYGLEDIKQRILEFISVGHIKGTVQGKILCFIGPPGTGKTSIAKSIAKALKKEFFRFSVGGLFDESEIKGHRRTYVGSMPGKIIQALKITQTSNPVILIDEIDKIGKRNHGDPSSALLEVLDPEQNVSFVDHYLDTPYDLSKVLFICTANSGQDIPAALSDRMEIIRLPGYVEEEQIEIVKNFIIPKTFIDCGIKLDQLSISDDVIKQIVKFYSREVGIRELEKLIEKIMRKTALKLVNGTAERVDLTLDNLEQYLGIPSYTSDRYYDVTPIGVVNGLAYTKKGGATLYIESTSEEIQKPLSSLPPSQQQQNQLEPSIKTTGNLGDVMSESSTIAYTFAKNFLYELDPNNTFFSNHNIHLHSPQGNIPKDGPSAGVTMVTSLLSLALNEPVQNNLGMTGEVTITGKVITIGGVKEKTIAAKRSGLTSVIFPINNRINFEELPTYIKNDIDVTYANDYKDVFEVAFPNKKYLLNNLKTF.

Disordered stretches follow at residues 37-57 (NNNNNNNNNNNNNNNNNNNNN) and 83-123 (KKKG…GNEK). A compositionally biased stretch (basic and acidic residues) spans 91-123 (NNDDNDNEKNEKNEKKVKNEKKEKNEKNDGNEK). Residues 159–357 (VVIYPSNSVN…MLYHMILNEQ (199 aa)) enclose the Lon N-terminal domain. 511 to 518 (GPPGTGKT) is a binding site for ATP. The Lon proteolytic domain occupies 747 to 945 (VTPIGVVNGL…KDVFEVAFPN (199 aa)). The span at 777 to 795 (KPLSSLPPSQQQQNQLEPS) shows a compositional bias: low complexity. A disordered region spans residues 777–800 (KPLSSLPPSQQQQNQLEPSIKTTG). Active-site residues include Ser-851 and Lys-894.

The protein belongs to the peptidase S16 family. Homohexamer or homoheptamer. Organized in a ring with a central cavity.

It is found in the mitochondrion matrix. It carries out the reaction Hydrolysis of proteins in presence of ATP.. ATP-dependent serine protease that mediates the selective degradation of misfolded, unassembled or oxidatively damaged polypeptides as well as certain short-lived regulatory proteins in the mitochondrial matrix. May also have a chaperone function in the assembly of inner membrane protein complexes. Participates in the regulation of mitochondrial gene expression and in the maintenance of the integrity of the mitochondrial genome. Binds to mitochondrial DNA in a site-specific manner. In Dictyostelium discoideum (Social amoeba), this protein is Lon protease homolog, mitochondrial 1.